A 644-amino-acid chain; its full sequence is Chaperone protein DnaK (644 aa).

Thr199 is subject to Phosphothreonine; by autocatalysis. The interval 602 to 644 (LYAEQSAQQQGSAGATGGEQPKADKAADDGVVDAEFEEVKDDK) is disordered. The span at 604–614 (AEQSAQQQGSA) shows a compositional bias: low complexity. Positions 631-644 (GVVDAEFEEVKDDK) are enriched in acidic residues.

This sequence belongs to the heat shock protein 70 family.

Its function is as follows. Acts as a chaperone. In Teredinibacter turnerae (strain ATCC 39867 / T7901), this protein is Chaperone protein DnaK.